The sequence spans 907 residues: Protein translocase subunit SecA (907 aa).

ATP contacts are provided by residues glutamine 87, 105-109, and aspartate 512; that span reads GEGKT. The segment at 834–907 is disordered; the sequence is QSDVDDMEQR…KYKQCHGKLS (74 aa). Over residues 840-856 the composition is skewed to basic and acidic residues; the sequence is MEQRRREEEAKIQRDYQ. Residues 865-876 are compositionally biased toward polar residues; it reads DESQASSDNTPK. Residues 878 to 887 show a composition bias toward basic and acidic residues; it reads MIREGDKVGR. Zn(2+) contacts are provided by cysteine 891, cysteine 893, cysteine 902, and histidine 903. Over residues 897 to 907 the composition is skewed to basic residues; sequence KKYKQCHGKLS.

Belongs to the SecA family. In terms of assembly, monomer and homodimer. Part of the essential Sec protein translocation apparatus which comprises SecA, SecYEG and auxiliary proteins SecDF-YajC and YidC. It depends on Zn(2+) as a cofactor.

The protein resides in the cell inner membrane. The protein localises to the cytoplasm. The enzyme catalyses ATP + H2O + cellular proteinSide 1 = ADP + phosphate + cellular proteinSide 2.. Its function is as follows. Part of the Sec protein translocase complex. Interacts with the SecYEG preprotein conducting channel. Has a central role in coupling the hydrolysis of ATP to the transfer of proteins into and across the cell membrane, serving both as a receptor for the preprotein-SecB complex and as an ATP-driven molecular motor driving the stepwise translocation of polypeptide chains across the membrane. The protein is Protein translocase subunit SecA of Shewanella denitrificans (strain OS217 / ATCC BAA-1090 / DSM 15013).